The following is a 341-amino-acid chain: 4-hydroxy-2-oxovalerate aldolase (341 aa).

One can recognise a Pyruvate carboxyltransferase domain in the interval 5–257; that stretch reads ITLHDMTLRD…ETGVDVFRIA (253 aa). A substrate-binding site is contributed by 13–14; that stretch reads RD. Mn(2+) is bound at residue D14. Catalysis depends on H17, which acts as the Proton acceptor. Positions 167 and 196 each coordinate substrate. Residues H196 and H198 each contribute to the Mn(2+) site. A substrate-binding site is contributed by Y287.

It belongs to the 4-hydroxy-2-oxovalerate aldolase family.

It catalyses the reaction (S)-4-hydroxy-2-oxopentanoate = acetaldehyde + pyruvate. The sequence is that of 4-hydroxy-2-oxovalerate aldolase (mhpE) from Cupriavidus taiwanensis (strain DSM 17343 / BCRC 17206 / CCUG 44338 / CIP 107171 / LMG 19424 / R1) (Ralstonia taiwanensis (strain LMG 19424)).